A 349-amino-acid chain; its full sequence is Protein Wnt-7b (349 aa).

An N-terminal signal peptide occupies residues 1-24; it reads MHRNFRKWIFYVFLCFGVIYVKLG. 5 cysteine pairs are disulfide-bonded: cysteine 73–cysteine 84, cysteine 123–cysteine 131, cysteine 133–cysteine 152, cysteine 200–cysteine 214, and cysteine 202–cysteine 209. Residues asparagine 83 and asparagine 127 are each glycosylated (N-linked (GlcNAc...) asparagine). Serine 206 carries the O-palmitoleoyl serine; by PORCN lipid modification. Positions 238 to 266 are disordered linker; it reads VEVVRASRLRQPTFLKIKQIKSYQKPMET. 6 disulfide bridges follow: cysteine 278/cysteine 309, cysteine 294/cysteine 304, cysteine 308/cysteine 348, cysteine 324/cysteine 339, cysteine 326/cysteine 336, and cysteine 331/cysteine 332. N-linked (GlcNAc...) asparagine glycosylation is present at asparagine 295.

Belongs to the Wnt family. Post-translationally, palmitoleoylation is required for efficient binding to frizzled receptors. Depalmitoleoylation leads to Wnt signaling pathway inhibition. As to expression, expressed in differentiating lens fiber cells.

The protein resides in the secreted. It is found in the extracellular space. The protein localises to the extracellular matrix. Ligand for members of the frizzled family of seven transmembrane receptors that functions in the canonical Wnt/beta-catenin signaling pathway. Required for normal fusion of the chorion and the allantois during placenta development. Required for central nervous system (CNS) angiogenesis and blood-brain barrier regulation. This chain is Protein Wnt-7b (WNT7B), found in Gallus gallus (Chicken).